Reading from the N-terminus, the 173-residue chain is MDPQAATGRGPGERSSQEAPSAEAGFATADLSGRETETELAVDRLASGAQSIPADIPAHAEGPSSEEEGFAVEKEADGELYAWELSEGPSCPPMEQAADLFNEDWDLELKADQGNPYDADDIQGSISQEIKPWVCCAPQGDMIYDPSWHHPPPLIPHYSKMVFETGQFDDAED.

Residue M1 is modified to N-acetylmethionine. Residues 1–70 (MDPQAATGRG…EGPSSEEEGF (70 aa)) are disordered. S64 and S65 each carry phosphoserine.

As to quaternary structure, interacts with PRMT5. Interacts with histone H4; specifically interacts with the N-terminus of histone H4 but not with histone H3. Interacts with CBFB. Found in a complex with PRMT5, RUNX1 and CBFB.

The protein localises to the nucleus. In terms of biological role, histone-binding protein required for histone H4 methyltransferase activity of PRMT5. Specifically required for histone H4 'Arg-3' methylation mediated by PRMT5, but not histone H3 'Arg-8' methylation, suggesting that it modulates the substrate specificity of PRMT5. Specifically interacts with the N-terminus of histone H4 but not with histone H3, suggesting that it acts by promoting the association between histone H4 and PRMT5. Involved in CCNE1 promoter repression. Plays a role in muscle cell differentiation by modulating the recruitment of PRMT5 to the promoter of genes involved in the coordination between cell cycle exit and muscle differentiation. In Mus musculus (Mouse), this protein is Coordinator of PRMT5 and differentiation stimulator (Coprs).